A 111-amino-acid polypeptide reads, in one-letter code: Large ribosomal subunit protein uL22 (111 aa).

It belongs to the universal ribosomal protein uL22 family. In terms of assembly, part of the 50S ribosomal subunit.

Functionally, this protein binds specifically to 23S rRNA; its binding is stimulated by other ribosomal proteins, e.g. L4, L17, and L20. It is important during the early stages of 50S assembly. It makes multiple contacts with different domains of the 23S rRNA in the assembled 50S subunit and ribosome. The globular domain of the protein is located near the polypeptide exit tunnel on the outside of the subunit, while an extended beta-hairpin is found that lines the wall of the exit tunnel in the center of the 70S ribosome. In Clostridium acetobutylicum (strain ATCC 824 / DSM 792 / JCM 1419 / IAM 19013 / LMG 5710 / NBRC 13948 / NRRL B-527 / VKM B-1787 / 2291 / W), this protein is Large ribosomal subunit protein uL22.